The sequence spans 500 residues: Cholesterol 24-hydroxylase (500 aa).

A helical membrane pass occupies residues 3–23 (PGLLLLGSAVLLAFGLCCTFV). Position 437 (Cys437) interacts with heme.

The protein belongs to the cytochrome P450 family. Heme serves as cofactor. Expressed in high level in the pyramidal cells of the hippocampus, Purkinje cells of the cerebellum, and neuronal cell bodies in layers II/III, V, and VI of the cortex. Expressed in hippocampal and cerebellar interneurons, in retinal ganglion cells, and in a subset of retinal cells localized to the inner nuclear layer (at protein level).

It localises to the endoplasmic reticulum membrane. The protein resides in the microsome membrane. It is found in the postsynapse. Its subcellular location is the presynapse. The protein localises to the cell projection. It localises to the dendrite. The enzyme catalyses cholesterol + reduced [NADPH--hemoprotein reductase] + O2 = (24S)-hydroxycholesterol + oxidized [NADPH--hemoprotein reductase] + H2O + H(+). It carries out the reaction cholestanol + reduced [NADPH--hemoprotein reductase] + O2 = (24S)-hydroxycholestanol + oxidized [NADPH--hemoprotein reductase] + H2O + H(+). It catalyses the reaction 7-dehydrocholesterol + reduced [NADPH--hemoprotein reductase] + O2 = cholesta-5,7-dien-3beta,24S-diol + oxidized [NADPH--hemoprotein reductase] + H2O + H(+). The catalysed reaction is 7-dehydrocholesterol + reduced [NADPH--hemoprotein reductase] + O2 = cholesta-5,7-dien-3beta,25-diol + oxidized [NADPH--hemoprotein reductase] + H2O + H(+). The enzyme catalyses desmosterol + reduced [NADPH--hemoprotein reductase] + O2 = (24Z),26-hydroxydesmosterol + oxidized [NADPH--hemoprotein reductase] + H2O + H(+). It carries out the reaction desmosterol + reduced [NADPH--hemoprotein reductase] + O2 = (24S)-25-epoxycholesterol + oxidized [NADPH--hemoprotein reductase] + H2O + H(+). It catalyses the reaction 4beta-hydroxycholesterol + reduced [NADPH--hemoprotein reductase] + O2 = 4beta,24S-dihydroxycholesterol + oxidized [NADPH--hemoprotein reductase] + H2O + H(+). The catalysed reaction is (24S)-hydroxycholesterol + reduced [NADPH--hemoprotein reductase] + O2 = (24S,25R)-24,26-dihydroxycholesterol + oxidized [NADPH--hemoprotein reductase] + H2O + H(+). The enzyme catalyses (24S)-hydroxycholesterol + reduced [NADPH--hemoprotein reductase] + O2 = 24S,25-dihydroxycholesterol + oxidized [NADPH--hemoprotein reductase] + H2O + H(+). It carries out the reaction 7alpha-hydroxycholesterol + reduced [NADPH--hemoprotein reductase] + O2 = (24S)-7alpha-dihydroxycholesterol + oxidized [NADPH--hemoprotein reductase] + H2O + H(+). It catalyses the reaction progesterone + reduced [NADPH--hemoprotein reductase] + O2 = 17alpha-hydroxyprogesterone + oxidized [NADPH--hemoprotein reductase] + H2O + H(+). The catalysed reaction is testosterone + reduced [NADPH--hemoprotein reductase] + O2 = 16beta,17beta-dihydroxyandrost-4-en-3-one + oxidized [NADPH--hemoprotein reductase] + H2O + H(+). The enzyme catalyses testosterone + reduced [NADPH--hemoprotein reductase] + O2 = 2-hydroxytestosterone + oxidized [NADPH--hemoprotein reductase] + H2O + H(+). It carries out the reaction testosterone + reduced [NADPH--hemoprotein reductase] + O2 = 6beta,17beta-dihydroxyandrost-4-en-3-one + oxidized [NADPH--hemoprotein reductase] + H2O + H(+). It participates in steroid metabolism; cholesterol degradation. Its pathway is lipid metabolism; C21-steroid hormone metabolism. Functionally, P450 monooxygenase that plays a major role in cholesterol homeostasis in the brain. Primarily catalyzes the hydroxylation (with S stereochemistry) at C-24 of cholesterol side chain, triggering cholesterol diffusion out of neurons and its further degradation. By promoting constant cholesterol elimination in neurons, may activate the mevalonate pathway and coordinate the synthesis of new cholesterol and nonsterol isoprenoids involved in synaptic activity and learning. Further hydroxylates cholesterol derivatives and hormone steroids on both the ring and side chain of these molecules, converting them into active oxysterols involved in lipid signaling and biosynthesis. Acts as an epoxidase converting cholesta-5,24-dien-3beta-ol/desmosterol into (24S),25-epoxycholesterol, an abundant lipid ligand of nuclear NR1H2 and NR1H3 receptors shown to promote neurogenesis in developing brain. May also catalyze the oxidative metabolism of xenobiotics, such as clotrimazole. The chain is Cholesterol 24-hydroxylase from Mus musculus (Mouse).